We begin with the raw amino-acid sequence, 56 residues long: Large ribosomal subunit protein bL33A (56 aa).

The protein belongs to the bacterial ribosomal protein bL33 family.

The chain is Large ribosomal subunit protein bL33A from Sorangium cellulosum (strain So ce56) (Polyangium cellulosum (strain So ce56)).